A 90-amino-acid chain; its full sequence is Small ribosomal subunit protein bS16 (90 aa).

The protein belongs to the bacterial ribosomal protein bS16 family.

This chain is Small ribosomal subunit protein bS16, found in Lactobacillus acidophilus (strain ATCC 700396 / NCK56 / N2 / NCFM).